Here is a 671-residue protein sequence, read N- to C-terminus: Major S-layer protein (671 aa).

Positions 1–24 (MKRFAALSLAALMLLTVFASAASA) are cleaved as a signal peptide. Residues Asn-36, Asn-70, Asn-116, and Asn-350 are each glycosylated (N-linked (GlcNAc...) asparagine). Residues 594 to 650 (GEEVSGEEETPEETPTGEVTETEGEEETPTEVTETPTEGEPAPEETETTESEGTTPG) are disordered. A compositionally biased stretch (acidic residues) spans 613–622 (TETEGEEETP). Low complexity predominate over residues 623–633 (TEVTETPTEGE). Residues 634 to 643 (PAPEETETTE) are compositionally biased toward acidic residues. A helical transmembrane segment spans residues 647 to 667 (TTPGFGFMFGLVGLLAVVYLV).

Belongs to the Methanosarcinales S-layer protein family. Glycosylated.

The protein localises to the secreted. Its subcellular location is the cell wall. It localises to the S-layer. It is found in the cell membrane. Functionally, S-layer protein. The S-layer is a paracrystalline mono-layered assembly of proteins which coat the surface of the cell. The sequence is that of Major S-layer protein from Methanosarcina acetivorans (strain ATCC 35395 / DSM 2834 / JCM 12185 / C2A).